The following is an 88-amino-acid chain: Insulin-related peptide 4 (88 aa).

An N-terminal signal peptide occupies residues 1 to 19; it reads MKLTLIILLVVAYSWCSEA. The propeptide occupies 20-45; that stretch reads QNEARVFCGRVLSERLAALCWGPNSV. Arg65 carries the post-translational modification Arginine amide. Positions 69 to 88 are excised as a propeptide; it reads GLATECCDKACTVEELLSYC.

The protein belongs to the insulin family. In terms of tissue distribution, DAGWWLTRGAARSLGGVR-amide: Expressed in corpora cardiaca (CC), corpora allata (CA), antennal lobe (AL) and gnathal ganglion (GNG) (at protein level). Expression in CC and CA detected in most animals, in AL and GNG in few animals (at protein level).

It localises to the secreted. This chain is Insulin-related peptide 4, found in Agrotis ipsilon (Black cutworm moth).